The following is a 174-amino-acid chain: Alkyl hydroperoxide reductase AhpD (174 aa).

Catalysis depends on C130, which acts as the Proton donor. An intrachain disulfide couples C130 to C133. The active-site Cysteine sulfenic acid (-SOH) intermediate is C133.

It belongs to the AhpD family. Homotrimer.

The catalysed reaction is N(6)-[(R)-dihydrolipoyl]-L-lysyl-[lipoyl-carrier protein] + a hydroperoxide = N(6)-[(R)-lipoyl]-L-lysyl-[lipoyl-carrier protein] + an alcohol + H2O. Antioxidant protein with alkyl hydroperoxidase activity. Required for the reduction of the AhpC active site cysteine residues and for the regeneration of the AhpC enzyme activity. This chain is Alkyl hydroperoxide reductase AhpD, found in Corynebacterium kroppenstedtii (strain DSM 44385 / JCM 11950 / CIP 105744 / CCUG 35717).